The sequence spans 373 residues: Putative zinc finger protein 012R (373 aa).

Residues 2-29 (FECTHCDLHFESKSKLATHQKTKKCTAH) form a C2H2-type zinc finger.

The protein belongs to the IIV-6 302L family.

In Invertebrate iridescent virus 3 (IIV-3), this protein is Putative zinc finger protein 012R.